A 90-amino-acid polypeptide reads, in one-letter code: Small ribosomal subunit protein bS20 (90 aa).

Belongs to the bacterial ribosomal protein bS20 family.

Functionally, binds directly to 16S ribosomal RNA. The sequence is that of Small ribosomal subunit protein bS20 from Mesomycoplasma hyopneumoniae (strain 232) (Mycoplasma hyopneumoniae).